A 192-amino-acid polypeptide reads, in one-letter code: Thymidylate kinase (192 aa).

Gly7–Ser14 lines the ATP pocket.

This sequence belongs to the thymidylate kinase family.

The catalysed reaction is dTMP + ATP = dTDP + ADP. Phosphorylation of dTMP to form dTDP in both de novo and salvage pathways of dTTP synthesis. The sequence is that of Thymidylate kinase from Campylobacter jejuni subsp. jejuni serotype O:6 (strain 81116 / NCTC 11828).